The primary structure comprises 95 residues: Class II hydrophobin 3 (95 aa).

The first 16 residues, 1-16, serve as a signal peptide directing secretion; the sequence is MKLLAVAALLAGAAIA. 4 disulfides stabilise this stretch: C28–C77, C38–C68, C39–C51, and C78–C89.

This sequence belongs to the cerato-ulmin hydrophobin family.

Its subcellular location is the secreted. The protein resides in the cell wall. Functionally, aerial growth, conidiation, and dispersal of filamentous fungi in the environment rely upon a capability of their secreting small amphipathic proteins called hydrophobins (HPBs) with low sequence identity. Class I can self-assemble into an outermost layer of rodlet bundles on aerial cell surfaces, conferring cellular hydrophobicity that supports fungal growth, development and dispersal; whereas Class II form highly ordered films at water-air interfaces through intermolecular interactions but contribute nothing to the rodlet structure. Hyd3 plays a neglectable role in hyphal growth and asexual development and does not seem involved in cellular hydrophobicity, conidial adhesion, stress tolerance nor insect pathogenicity. In Metarhizium robertsii (strain ARSEF 23 / ATCC MYA-3075) (Metarhizium anisopliae (strain ARSEF 23)), this protein is Class II hydrophobin 3.